A 65-amino-acid polypeptide reads, in one-letter code: Large ribosomal subunit protein bL33c (65 aa).

Belongs to the bacterial ribosomal protein bL33 family.

The protein localises to the plastid. The protein is Large ribosomal subunit protein bL33c of Aneura mirabilis (Parasitic liverwort).